We begin with the raw amino-acid sequence, 360 residues long: Phospho-N-acetylmuramoyl-pentapeptide-transferase (360 aa).

Transmembrane regions (helical) follow at residues 27-47 (GALI…INSL), 71-91 (TPTM…LLWA), 93-113 (LSSI…SIGF), 134-154 (LGLE…NGQA), 168-188 (FIIN…VGAG), 199-219 (GLAI…AYLS), 239-259 (LAVV…FNAP), 262-282 (AIFM…TVAV), 288-308 (IVLV…IIQV), and 337-357 (QVVI…LSTL).

The protein belongs to the glycosyltransferase 4 family. MraY subfamily. Mg(2+) is required as a cofactor.

The protein resides in the cell inner membrane. The enzyme catalyses UDP-N-acetyl-alpha-D-muramoyl-L-alanyl-gamma-D-glutamyl-meso-2,6-diaminopimeloyl-D-alanyl-D-alanine + di-trans,octa-cis-undecaprenyl phosphate = di-trans,octa-cis-undecaprenyl diphospho-N-acetyl-alpha-D-muramoyl-L-alanyl-D-glutamyl-meso-2,6-diaminopimeloyl-D-alanyl-D-alanine + UMP. Its pathway is cell wall biogenesis; peptidoglycan biosynthesis. Functionally, catalyzes the initial step of the lipid cycle reactions in the biosynthesis of the cell wall peptidoglycan: transfers peptidoglycan precursor phospho-MurNAc-pentapeptide from UDP-MurNAc-pentapeptide onto the lipid carrier undecaprenyl phosphate, yielding undecaprenyl-pyrophosphoryl-MurNAc-pentapeptide, known as lipid I. This is Phospho-N-acetylmuramoyl-pentapeptide-transferase from Mesorhizobium japonicum (strain LMG 29417 / CECT 9101 / MAFF 303099) (Mesorhizobium loti (strain MAFF 303099)).